The primary structure comprises 685 residues: DNA-directed RNA polymerase subunit beta' (685 aa).

C69, C71, C87, and C90 together coordinate Zn(2+). The Mg(2+) site is built by D489, D491, and D493.

It belongs to the RNA polymerase beta' chain family. RpoC1 subfamily. As to quaternary structure, in plastids the minimal PEP RNA polymerase catalytic core is composed of four subunits: alpha, beta, beta', and beta''. When a (nuclear-encoded) sigma factor is associated with the core the holoenzyme is formed, which can initiate transcription. It depends on Mg(2+) as a cofactor. The cofactor is Zn(2+).

Its subcellular location is the plastid. The protein localises to the chloroplast. The enzyme catalyses RNA(n) + a ribonucleoside 5'-triphosphate = RNA(n+1) + diphosphate. Its function is as follows. DNA-dependent RNA polymerase catalyzes the transcription of DNA into RNA using the four ribonucleoside triphosphates as substrates. The chain is DNA-directed RNA polymerase subunit beta' from Buxus microphylla (Littleleaf boxwood).